The following is a 257-amino-acid chain: Putative pentatricopeptide repeat-containing protein At1g43010 (257 aa).

PPR repeat units follow at residues 133-168 (KMRD…GFLL) and 169-203 (KPYL…NMEV).

This sequence belongs to the PPR family. P subfamily.

The polypeptide is Putative pentatricopeptide repeat-containing protein At1g43010 (Arabidopsis thaliana (Mouse-ear cress)).